The sequence spans 589 residues: Aspartate--tRNA ligase (589 aa).

Glu174 contributes to the L-aspartate binding site. The segment at 198–201 is aspartate; sequence QLFK. Residue Arg220 participates in L-aspartate binding. ATP contacts are provided by residues 220–222 and Gln229; that span reads RDE. His448 is a binding site for L-aspartate. Residue Glu483 participates in ATP binding. Arg490 is an L-aspartate binding site. Residue 535 to 538 participates in ATP binding; it reads GIDR.

Belongs to the class-II aminoacyl-tRNA synthetase family. Type 1 subfamily. In terms of assembly, homodimer.

It is found in the cytoplasm. It catalyses the reaction tRNA(Asp) + L-aspartate + ATP = L-aspartyl-tRNA(Asp) + AMP + diphosphate. In terms of biological role, catalyzes the attachment of L-aspartate to tRNA(Asp) in a two-step reaction: L-aspartate is first activated by ATP to form Asp-AMP and then transferred to the acceptor end of tRNA(Asp). In Xylella fastidiosa (strain M23), this protein is Aspartate--tRNA ligase.